Consider the following 146-residue polypeptide: Snaclec stejaggregin-B subunit beta-2 (146 aa).

Positions 1-23 (MGRFIFVSFGLLVVFLSLSGSGA) are cleaved as a signal peptide. Positions 32 to 143 (YDLYCYRVFQ…CSQTYPFVCK (112 aa)) constitute a C-type lectin domain. Cystine bridges form between C53–C142 and C119–C134.

The protein belongs to the snaclec family. As to quaternary structure, heteromultimer; disulfide-linked. As to expression, expressed by the venom gland.

The protein localises to the secreted. Functionally, interferes with one step of hemostasis (modulation of platelet aggregation, or coagulation cascade, for example). The sequence is that of Snaclec stejaggregin-B subunit beta-2 from Trimeresurus stejnegeri (Chinese green tree viper).